A 266-amino-acid chain; its full sequence is NADP-dependent mannitol dehydrogenase (266 aa).

NADP(+) contacts are provided by Ser-53, Asn-107, and Lys-140. Residue Ser-159 is the Proton donor of the active site. The NADP(+) site is built by Tyr-174, Lys-178, Ile-206, and Thr-208. Catalysis depends on Tyr-174, which acts as the Proton acceptor. The active-site Lowers pKa of active site Tyr is Lys-178.

Belongs to the short-chain dehydrogenases/reductases (SDR) family. Homotetramer.

It catalyses the reaction D-mannitol + NADP(+) = D-fructose + NADPH + H(+). Its function is as follows. D-mannitol 2-dehydrogenase which is not necessary for D-mannitol catabolism. D-mannitol metabolism occurs via at least two different routes involving mannitol dehydrogenase (MDH) or mannitol 1-phosphate dehydrogenase, and the exact physiological role of mannitol dehydrogenases remains unclear. The sequence is that of NADP-dependent mannitol dehydrogenase from Hypocrea jecorina (strain ATCC 56765 / BCRC 32924 / NRRL 11460 / Rut C-30) (Trichoderma reesei).